Here is a 508-residue protein sequence, read N- to C-terminus: Photosystem II CP47 reaction center protein (508 aa).

A run of 6 helical transmembrane segments spans residues 21 to 36 (AVHI…WAGS), 101 to 115 (IVFS…IWHW), 140 to 156 (GIHL…FGAF), 203 to 218 (IAAG…FHLS), 237 to 252 (VLSS…AFVV), and 457 to 472 (SFAL…HGAR).

This sequence belongs to the PsbB/PsbC family. PsbB subfamily. PSII is composed of 1 copy each of membrane proteins PsbA, PsbB, PsbC, PsbD, PsbE, PsbF, PsbH, PsbI, PsbJ, PsbK, PsbL, PsbM, PsbT, PsbX, PsbY, PsbZ, Psb30/Ycf12, at least 3 peripheral proteins of the oxygen-evolving complex and a large number of cofactors. It forms dimeric complexes. It depends on Binds multiple chlorophylls. PSII binds additional chlorophylls, carotenoids and specific lipids. as a cofactor.

It localises to the plastid. Its subcellular location is the chloroplast thylakoid membrane. Functionally, one of the components of the core complex of photosystem II (PSII). It binds chlorophyll and helps catalyze the primary light-induced photochemical processes of PSII. PSII is a light-driven water:plastoquinone oxidoreductase, using light energy to abstract electrons from H(2)O, generating O(2) and a proton gradient subsequently used for ATP formation. This Ranunculus macranthus (Large buttercup) protein is Photosystem II CP47 reaction center protein.